The following is a 92-amino-acid chain: DNA-directed RNA polymerase subunit omega (92 aa).

Belongs to the RNA polymerase subunit omega family. The RNAP catalytic core consists of 2 alpha, 1 beta, 1 beta' and 1 omega subunit. When a sigma factor is associated with the core the holoenzyme is formed, which can initiate transcription.

It carries out the reaction RNA(n) + a ribonucleoside 5'-triphosphate = RNA(n+1) + diphosphate. Functionally, promotes RNA polymerase assembly. Latches the N- and C-terminal regions of the beta' subunit thereby facilitating its interaction with the beta and alpha subunits. The sequence is that of DNA-directed RNA polymerase subunit omega from Shewanella baltica (strain OS223).